We begin with the raw amino-acid sequence, 439 residues long: Protein translocase subunit SecY (439 aa).

10 helical membrane passes run 19–39, 68–88, 116–136, 151–171, 176–196, 216–236, 269–289, 312–332, 373–393, and 396–416; these read ILFT…TAPG, YSLF…VQLL, YITL…FQAM, LMIG…GEQI, FGSG…PSAI, WIFV…TTFV, VIPV…LQFL, WTGM…YSFV, VGSL…NVWG, and KIVA…IQAV.

The protein belongs to the SecY/SEC61-alpha family. In terms of assembly, component of the Sec protein translocase complex. Heterotrimer consisting of SecY, SecE and SecG subunits. The heterotrimers can form oligomers, although 1 heterotrimer is thought to be able to translocate proteins. Interacts with the ribosome. Interacts with SecDF, and other proteins may be involved. Interacts with SecA.

The protein localises to the cell membrane. Its function is as follows. The central subunit of the protein translocation channel SecYEG. Consists of two halves formed by TMs 1-5 and 6-10. These two domains form a lateral gate at the front which open onto the bilayer between TMs 2 and 7, and are clamped together by SecE at the back. The channel is closed by both a pore ring composed of hydrophobic SecY resides and a short helix (helix 2A) on the extracellular side of the membrane which forms a plug. The plug probably moves laterally to allow the channel to open. The ring and the pore may move independently. The sequence is that of Protein translocase subunit SecY from Lactococcus lactis subsp. cremoris (Streptococcus cremoris).